The sequence spans 367 residues: Queuine tRNA-ribosyltransferase (367 aa).

Catalysis depends on Asp89, which acts as the Proton acceptor. Substrate is bound by residues 89–93 (DSGGF), Asp143, Gln185, and Gly212. An RNA binding region spans residues 243–249 (GVGTPSD). Asp262 acts as the Nucleophile in catalysis. The tract at residues 267-271 (TRNAR) is RNA binding; important for wobble base 34 recognition. Positions 300, 302, 305, and 331 each coordinate Zn(2+).

The protein belongs to the queuine tRNA-ribosyltransferase family. As to quaternary structure, homodimer. Within each dimer, one monomer is responsible for RNA recognition and catalysis, while the other monomer binds to the replacement base PreQ1. Requires Zn(2+) as cofactor.

It catalyses the reaction 7-aminomethyl-7-carbaguanine + guanosine(34) in tRNA = 7-aminomethyl-7-carbaguanosine(34) in tRNA + guanine. The protein operates within tRNA modification; tRNA-queuosine biosynthesis. Functionally, catalyzes the base-exchange of a guanine (G) residue with the queuine precursor 7-aminomethyl-7-deazaguanine (PreQ1) at position 34 (anticodon wobble position) in tRNAs with GU(N) anticodons (tRNA-Asp, -Asn, -His and -Tyr). Catalysis occurs through a double-displacement mechanism. The nucleophile active site attacks the C1' of nucleotide 34 to detach the guanine base from the RNA, forming a covalent enzyme-RNA intermediate. The proton acceptor active site deprotonates the incoming PreQ1, allowing a nucleophilic attack on the C1' of the ribose to form the product. After dissociation, two additional enzymatic reactions on the tRNA convert PreQ1 to queuine (Q), resulting in the hypermodified nucleoside queuosine (7-(((4,5-cis-dihydroxy-2-cyclopenten-1-yl)amino)methyl)-7-deazaguanosine). In Thiobacillus denitrificans (strain ATCC 25259 / T1), this protein is Queuine tRNA-ribosyltransferase.